The chain runs to 411 residues: Epoxyqueuosine reductase (411 aa).

D171 functions as the Proton donor in the catalytic mechanism. The 4Fe-4S ferredoxin-type domain occupies 213-245 (LPLPVDKPQEEQCGRCVACMTTCPTGAIVAPYT). [4Fe-4S] cluster-binding residues include C225, C228, C231, C235, C251, C278, C281, and C285.

The protein belongs to the QueG family. Monomer. Cob(II)alamin serves as cofactor. The cofactor is [4Fe-4S] cluster.

It is found in the cytoplasm. The catalysed reaction is epoxyqueuosine(34) in tRNA + AH2 = queuosine(34) in tRNA + A + H2O. The protein operates within tRNA modification; tRNA-queuosine biosynthesis. Functionally, catalyzes the conversion of epoxyqueuosine (oQ) to queuosine (Q), which is a hypermodified base found in the wobble positions of tRNA(Asp), tRNA(Asn), tRNA(His) and tRNA(Tyr). This Yersinia pestis protein is Epoxyqueuosine reductase.